Reading from the N-terminus, the 54-residue chain is Large ribosomal subunit protein bL32c (54 aa).

Residues Met-1–Trp-20 are disordered.

It belongs to the bacterial ribosomal protein bL32 family.

It is found in the plastid. The protein resides in the chloroplast. The sequence is that of Large ribosomal subunit protein bL32c (rpl32) from Euglena gracilis.